The sequence spans 98 residues: Peptides MS9.1 (98 aa).

A signal peptide spans 1–21 (MKQSLILAVLCLALVFATIEA). The propeptide occupies 22–27 (KPKADP). 2 cysteine pairs are disulfide-bonded: Cys34/Cys46 and Cys37/Cys52. Propeptides lie at residues 63 to 64 (DP) and 92 to 98 (DPVRDAE).

The protein belongs to the sea anemone BBH family.

It is found in the secreted. The protein resides in the nematocyst. Functionally, acts as a positive modulator of mammalian TRPA1, a non-selective cation channel involved in detection of pain, in vitro yet has an analgesic and anti-inflammatory effect in vivo. This Metridium senile (Brown sea anemone) protein is Peptides MS9.1.